Here is a 349-residue protein sequence, read N- to C-terminus: Aspartate carbamoyltransferase catalytic subunit (349 aa).

Arg59 and Thr60 together coordinate carbamoyl phosphate. Lys87 contacts L-aspartate. Carbamoyl phosphate contacts are provided by Arg109, His142, and Gln145. L-aspartate is bound by residues Arg182 and Arg253. Residues Gly294 and Pro295 each coordinate carbamoyl phosphate.

This sequence belongs to the aspartate/ornithine carbamoyltransferase superfamily. ATCase family. As to quaternary structure, heterododecamer (2C3:3R2) of six catalytic PyrB chains organized as two trimers (C3), and six regulatory PyrI chains organized as three dimers (R2).

It catalyses the reaction carbamoyl phosphate + L-aspartate = N-carbamoyl-L-aspartate + phosphate + H(+). It functions in the pathway pyrimidine metabolism; UMP biosynthesis via de novo pathway; (S)-dihydroorotate from bicarbonate: step 2/3. Its function is as follows. Catalyzes the condensation of carbamoyl phosphate and aspartate to form carbamoyl aspartate and inorganic phosphate, the committed step in the de novo pyrimidine nucleotide biosynthesis pathway. In Synechococcus sp. (strain CC9311), this protein is Aspartate carbamoyltransferase catalytic subunit.